A 222-amino-acid chain; its full sequence is 7-cyano-7-deazaguanine synthase (222 aa).

11–21 (FSGGQDSTTCL) is a binding site for ATP. Zn(2+) contacts are provided by Cys187, Cys195, Cys198, and Cys201.

This sequence belongs to the QueC family. It depends on Zn(2+) as a cofactor.

The catalysed reaction is 7-carboxy-7-deazaguanine + NH4(+) + ATP = 7-cyano-7-deazaguanine + ADP + phosphate + H2O + H(+). The protein operates within purine metabolism; 7-cyano-7-deazaguanine biosynthesis. Its function is as follows. Catalyzes the ATP-dependent conversion of 7-carboxy-7-deazaguanine (CDG) to 7-cyano-7-deazaguanine (preQ(0)). This Actinobacillus pleuropneumoniae serotype 5b (strain L20) protein is 7-cyano-7-deazaguanine synthase.